Consider the following 429-residue polypeptide: Autophagy-related protein 18 (429 aa).

7 WD repeats span residues 1–36, 69–114, 139–182, 185–225, 230–269, 309–355, and 367–407; these read MAMN…KSYE, KRQS…LLYT, PLPQ…AINV, AHRS…KLYQ, SMPS…SSPD, KHNG…AWFK, and VNNG…GGEG. The L/FRRG motif signature appears at 226–230; sequence FRRGS. Over residues 262–275 the composition is skewed to low complexity; sequence SHPTSSPDASPSSP. The segment at 262–308 is disordered; that stretch reads SHPTSSPDASPSSPVGRDRSLSQSSSGYSPDRGDLTGDVGSSDFPAR.

The protein belongs to the WD repeat PROPPIN family. In terms of assembly, component of the PI(3,5)P2 regulatory complex.

Its subcellular location is the preautophagosomal structure membrane. It localises to the vacuole membrane. The protein resides in the endosome membrane. The PI(3,5)P2 regulatory complex regulates both the synthesis and turnover of phosphatidylinositol 3,5-bisphosphate (PtdIns(3,5)P2). Necessary for proper vacuole morphology. Plays an important role in osmotically-induced vacuole fragmentation. Required for cytoplasm to vacuole transport (Cvt) vesicle formation, pexophagy and starvation-induced autophagy. Involved in correct atg9 trafficking to the pre-autophagosomal structure. Might also be involved in premeiotic DNA replication. In Neosartorya fischeri (strain ATCC 1020 / DSM 3700 / CBS 544.65 / FGSC A1164 / JCM 1740 / NRRL 181 / WB 181) (Aspergillus fischerianus), this protein is Autophagy-related protein 18 (atg18).